We begin with the raw amino-acid sequence, 207 residues long: Small ribosomal subunit protein uS4 (207 aa).

The tract at residues 33–54 (KLDSKPGQHGRTSGARTSDYGN) is disordered. The span at 42–53 (GRTSGARTSDYG) shows a compositional bias: polar residues. The S4 RNA-binding domain maps to 97–157 (SRLDNVVYRM…EKSKKQVRIA (61 aa)).

It belongs to the universal ribosomal protein uS4 family. In terms of assembly, part of the 30S ribosomal subunit. Contacts protein S5. The interaction surface between S4 and S5 is involved in control of translational fidelity.

Its function is as follows. One of the primary rRNA binding proteins, it binds directly to 16S rRNA where it nucleates assembly of the body of the 30S subunit. In terms of biological role, with S5 and S12 plays an important role in translational accuracy. This is Small ribosomal subunit protein uS4 from Ralstonia pickettii (strain 12J).